The sequence spans 113 residues: Nucleoid-associated protein Syncc9902_0023 (113 aa).

Belongs to the YbaB/EbfC family. Homodimer.

The protein localises to the cytoplasm. It localises to the nucleoid. Its function is as follows. Binds to DNA and alters its conformation. May be involved in regulation of gene expression, nucleoid organization and DNA protection. This Synechococcus sp. (strain CC9902) protein is Nucleoid-associated protein Syncc9902_0023.